The sequence spans 77 residues: MKLIIFTGLVLFAIVSLIEAQAENEKACLPQYQVCTDAPGNCCSNVVCDCYGRYKSGARIGRNCFCLQKGVIYKREN.

Positions 1-20 are cleaved as a signal peptide; it reads MKLIIFTGLVLFAIVSLIEA. Positions 21 to 26 are excised as a propeptide; that stretch reads QAENEK.

The protein belongs to the neurotoxin 19 (CSTX) family. 08 (U8-Lctx) subfamily. In terms of processing, contains 4 disulfide bonds. In terms of tissue distribution, expressed by the venom gland.

Its subcellular location is the secreted. The sequence is that of U8-lycotoxin-Ls1d from Lycosa singoriensis (Wolf spider).